We begin with the raw amino-acid sequence, 875 residues long: MTLARFALALLFGVLPEVVGFESVLNDSLHHRHRHSPPPGLLYPHYLPTEQRHRRTRPPPPLPRFPRPPRALPALRPHALQAGHTPEPHPRGCPAGEPWVSVTDFGAPCLRWAEVPPSLERSSPAGWAQLRGQRHNFCRSPDGAGRPWCFYGDARGKVDWGYCDCRHGSVRLRGSKNEFEGTVEVYANGVWGTVCSSHWDDSDASVICHQLQLGGKGIAKQTPFSGLGLIPVYWSNVRCRGDEENILLCEKDIWQGGVCPQKMAAAVMCSFSHGPAFPIIRLVGGSSVHEGRVELYHAGQWGTICDDQWDDADAEVICRQLSLSGIAKAWHQAYFGEGSGPVMLDEVRCTGNELSIEQCPKSSWGEHNCGHKEDAGVSCTPLTDGVIRLAGGKGSHEGRLEVYYSGQWGTVCDDGWTELNTYVVCRQLGFKYGKQASANHFEESAGPIWLDDVSCSGKETRFLQCSRRQWGRHDCSHREDVGIACYPGSEGHRLSLGFPVRLMDGENKKEGRVEVFINGQWGTICDDGWTDKDAAVICRQLGYKGPARARTMAYFGEGKGPIHVDNVKCTGNERSLADCIKQDIGRHNCRHSEDAGVICDYFGKKASGNSNKESLSSVCGLRLLHRRQKRIIGGKNSLRGGWPWQVSLRLKSSHRDGRLLCGATLLSSCWVLTAAHCFKRYGNSTRNYAVRVGDYHTLVPEEFEEEIGVQEIVIHREYRPDSSDYDIALVRLQGPEEQCARFNSHVLPACLPLWRERPQKTASNCYITGWGDTGQAYSRTLQQAAIHLLPKRFCEERYKGRFTGRMLCAGNLHEHKHVDSCQGDSGGPLMCERPGESWVVYGVTSWGYGCGVKDSPGVYTKVSAFVPWIKSVTKL.

Residues 1 to 20 (MTLARFALALLFGVLPEVVG) form the signal peptide. An N-linked (GlcNAc...) asparagine glycan is attached at asparagine 26. The segment at 51 to 72 (QRHRRTRPPPPLPRFPRPPRAL) is disordered. Pro residues predominate over residues 58–71 (PPPPLPRFPRPPRA). Residues 93–165 (CPAGEPWVSV…GKVDWGYCDC (73 aa)) form the Kringle domain. 20 disulfides stabilise this stretch: cysteine 93-cysteine 165, cysteine 109-cysteine 149, cysteine 138-cysteine 163, cysteine 195-cysteine 259, cysteine 208-cysteine 269, cysteine 239-cysteine 249, cysteine 305-cysteine 369, cysteine 318-cysteine 379, cysteine 349-cysteine 359, cysteine 412-cysteine 475, cysteine 425-cysteine 485, cysteine 455-cysteine 465, cysteine 525-cysteine 589, cysteine 538-cysteine 599, cysteine 569-cysteine 579, cysteine 619-cysteine 750, cysteine 661-cysteine 677, cysteine 765-cysteine 831, cysteine 794-cysteine 808, and cysteine 821-cysteine 850. SRCR domains follow at residues 170-271 (VRLR…MCSF), 280-381 (IRLV…SCTP), 387-487 (IRLA…ACYP), and 500-601 (VRLM…ICDY). The tract at residues 619-630 (CGLRLLHRRQKR) is zymogen activation region. The region spanning 631–874 (IIGGKNSLRG…FVPWIKSVTK (244 aa)) is the Peptidase S1 domain. Histidine 676 acts as the Charge relay system in catalysis. The N-linked (GlcNAc...) asparagine glycan is linked to asparagine 683. The active-site Charge relay system is the aspartate 726. The active-site Charge relay system is serine 825.

It belongs to the peptidase S1 family.

It localises to the secreted. In terms of biological role, plays a role in neuronal plasticity and the proteolytic action may subserve structural reorganizations associated with learning and memory operations. This chain is Neurotrypsin (PRSS12), found in Saguinus labiatus (Red-chested mustached tamarin).